A 940-amino-acid chain; its full sequence is Chordin (940 aa).

A signal peptide spans 1 to 19 (MMEGLLWILLSVIIASVHG). Residues 42-118 (SGCSFGGRFY…LPGHCCKTCP (77 aa)) form the VWFC 1 domain. 4 consecutive CHRD domains span residues 162–277 (TTTD…KHRA), 279–398 (FAET…GRRS), 404–519 (SVLS…LLPY), and 525–652 (RRNE…VPNH). 2 N-linked (GlcNAc...) asparagine glycosylation sites follow: N347 and N430. 3 VWFC domains span residues 689 to 748 (HSCF…PICE), 767 to 836 (EGCY…KECP), and 855 to 919 (RLCK…PECI).

Belongs to the chordin family. As to quaternary structure, interacts with twsg1 and/or bmp4. In terms of processing, cleaved by tolloid proteases; cleavage participates in dorsoventral patterning during early development.

The protein localises to the secreted. In terms of biological role, dorsalizing factor. Key developmental protein that dorsalizes early vertebrate embryonic tissues by binding to ventralizing TGF-beta family bone morphogenetic proteins (BMPs) and sequestering them in latent complexes. This Danio rerio (Zebrafish) protein is Chordin (chd).